We begin with the raw amino-acid sequence, 469 residues long: Signal recognition particle 54 kDa protein (469 aa).

GTP-binding positions include 104–111 (GLYGSGKT), 184–188 (DTAGR), and 242–245 (TKLD). Disordered stretches follow at residues 388–410 (ELENPRVVGQSRTKRICRGSGKP) and 447–469 (QQGGGGGGGMGGMGGGGMGPFGD). Positions 448 to 469 (QGGGGGGGMGGMGGGGMGPFGD) are enriched in gly residues.

Belongs to the GTP-binding SRP family. SRP54 subfamily. In terms of assembly, part of the signal recognition particle protein translocation system, which is composed of SRP and FtsY. Archaeal SRP consists of a 7S RNA molecule of 300 nucleotides and two protein subunits: SRP54 and SRP19.

It is found in the cytoplasm. It catalyses the reaction GTP + H2O = GDP + phosphate + H(+). In terms of biological role, involved in targeting and insertion of nascent membrane proteins into the cytoplasmic membrane. Binds to the hydrophobic signal sequence of the ribosome-nascent chain (RNC) as it emerges from the ribosomes. The SRP-RNC complex is then targeted to the cytoplasmic membrane where it interacts with the SRP receptor FtsY. In Haloarcula marismortui (strain ATCC 43049 / DSM 3752 / JCM 8966 / VKM B-1809) (Halobacterium marismortui), this protein is Signal recognition particle 54 kDa protein.